The sequence spans 467 residues: Glutamate--tRNA ligase (467 aa).

Positions 9-19 match the 'HIGH' region motif; sequence PSPTGYLHIGG. The 'KMSKS' region signature appears at 237–241; that stretch reads KLSKR. An ATP-binding site is contributed by Lys240.

Belongs to the class-I aminoacyl-tRNA synthetase family. Glutamate--tRNA ligase type 1 subfamily. In terms of assembly, monomer.

It localises to the cytoplasm. It catalyses the reaction tRNA(Glu) + L-glutamate + ATP = L-glutamyl-tRNA(Glu) + AMP + diphosphate. Functionally, catalyzes the attachment of glutamate to tRNA(Glu) in a two-step reaction: glutamate is first activated by ATP to form Glu-AMP and then transferred to the acceptor end of tRNA(Glu). The chain is Glutamate--tRNA ligase from Xanthomonas oryzae pv. oryzae (strain MAFF 311018).